A 589-amino-acid chain; its full sequence is Guanylate-binding protein 1 (589 aa).

Residues 1-309 (MASEIHMSEP…SAICSGELPC (309 aa)) form a GTPase domain (Globular) region. Residues 35–276 (TQPVVVVAIV…FTSYIFSYSG (242 aa)) enclose the GB1/RHD3-type G domain. GTP-binding positions include 47–53 (YRTGKSY), 67–69 (LGS), and 97–101 (DTEGL). Residue serine 156 is modified to Phosphoserine. Cysteine 586 carries the cysteine methyl ester modification. The S-farnesyl cysteine moiety is linked to residue cysteine 586. Residue cysteine 586 is the site of S-geranylgeranyl cysteine; partial attachment. At threonine 587 the chain carries Phosphothreonine. Residues 587–589 (TIL) constitute a propeptide, removed in mature form.

This sequence belongs to the TRAFAC class dynamin-like GTPase superfamily. GB1/RHD3 GTPase family. GB1 subfamily. In terms of assembly, homodimer; homodimerization occurs upon GTP-binding and is required for the second hydrolysis step from GDP to GMP. Undergoes conformational changes and oligomerization upon GTP-binding and hydrolysis. Heterodimer with other family members, including GBP2, GBP3, GBP4 and GBP5. Dimerization regulates subcellular location to membranous structures. Interacts with SQSTM1. Interacts (when phosphorylated) with 14-3-3 protein sigma (SFN); leading to GBP1 retention in the cytosol and inactivation. In terms of processing, isoprenylation of mouse GBP1 is incomplete. It persistently exists in the cell as a mixture of C20-modified and (more predominantly) unmodified form. Isoprenylation is required for proper subcellular location. Phosphorylated at Ser-156 by PIM1 in absence of infection, inhibits GBP1: phosphorylation promotes interaction with 14-3-3 protein sigma (SFN), leading to GBP1 retention in the cytosol. Dephosphorylated in response to infection, liberating GBP1.

The protein resides in the cytoplasmic vesicle membrane. It is found in the golgi apparatus membrane. It localises to the cell membrane. The protein localises to the cytoplasm. Its subcellular location is the cytosol. The protein resides in the secreted. It carries out the reaction GTP + H2O = GDP + phosphate + H(+). It catalyses the reaction GDP + H2O = GMP + phosphate + H(+). Functionally, interferon (IFN)-inducible GTPase that plays important roles in innate immunity against a diverse range of bacterial, viral and protozoan pathogens. Hydrolyzes GTP to GMP in two consecutive cleavage reactions: GTP is first hydrolyzed to GDP and then to GMP in a processive manner. Following infection, recruited to the pathogen-containing vacuoles or vacuole-escaped bacteria and promotes both inflammasome assembly and autophagy. Acts as a positive regulator of inflammasome assembly by facilitating the detection of inflammasome ligands from pathogens. Involved in the lysis of pathogen-containing vacuoles, releasing pathogens into the cytosol. Following pathogen release in the cytosol, forms a protein coat in a GTPase-dependent manner that encapsulates pathogens and promotes the detection of ligands by pattern recognition receptors. Plays a key role in inflammasome assembly in response to infection by Gram-negative bacteria: following pathogen release in the cytosol, forms a protein coat that encapsulates Gram-negative bacteria and directly binds to lipopolysaccharide (LPS), disrupting the O-antigen barrier and unmasking lipid A that is that detected by the non-canonical inflammasome effector CASP4/CASP11. Also promotes recruitment of proteins that mediate bacterial cytolysis, leading to release double-stranded DNA (dsDNA) that activates the AIM2 inflammasome. Involved in autophagy by regulating bacteriolytic peptide generation via its interaction with ubiquitin-binding protein SQSTM1, which delivers monoubiquitinated proteins to autolysosomes for the generation of bacteriolytic peptides. Confers protection to several pathogens, including the bacterial pathogens L.monocytogenes and M.bovis BCG as well as the protozoan pathogen T.gondii. Exhibits antiviral activity against influenza virus. The protein is Guanylate-binding protein 1 (Gbp1) of Mus musculus (Mouse).